The following is a 553-amino-acid chain: uncharacterized protein (553 aa).

The signal sequence occupies residues 1 to 31 (MEDIMTSLLVATSRVVVTISLAYVPVKSAFA). Catalysis depends on Ser207, which acts as the Acyl-ester intermediate. Cys275 and Cys292 are joined by a disulfide. Positions 276, 279, 281, 283, and 285 each coordinate Ca(2+). Catalysis depends on charge relay system residues Asp444 and His482. The cysteines at positions 528 and 550 are disulfide-linked.

It belongs to the tannase family.

This is an uncharacterized protein from Agrobacterium fabrum (strain C58 / ATCC 33970) (Agrobacterium tumefaciens (strain C58)).